The chain runs to 103 residues: Pyrimidine/purine nucleoside phosphorylase (103 aa).

Belongs to the nucleoside phosphorylase PpnP family.

The catalysed reaction is a purine D-ribonucleoside + phosphate = a purine nucleobase + alpha-D-ribose 1-phosphate. It catalyses the reaction adenosine + phosphate = alpha-D-ribose 1-phosphate + adenine. The enzyme catalyses cytidine + phosphate = cytosine + alpha-D-ribose 1-phosphate. It carries out the reaction guanosine + phosphate = alpha-D-ribose 1-phosphate + guanine. The catalysed reaction is inosine + phosphate = alpha-D-ribose 1-phosphate + hypoxanthine. It catalyses the reaction thymidine + phosphate = 2-deoxy-alpha-D-ribose 1-phosphate + thymine. The enzyme catalyses uridine + phosphate = alpha-D-ribose 1-phosphate + uracil. It carries out the reaction xanthosine + phosphate = alpha-D-ribose 1-phosphate + xanthine. Its function is as follows. Catalyzes the phosphorolysis of diverse nucleosides, yielding D-ribose 1-phosphate and the respective free bases. Can use uridine, adenosine, guanosine, cytidine, thymidine, inosine and xanthosine as substrates. Also catalyzes the reverse reactions. The protein is Pyrimidine/purine nucleoside phosphorylase of Shewanella sp. (strain MR-4).